The chain runs to 652 residues: Threonine--tRNA ligase (652 aa).

A TGS domain is found at 1 to 64 (MPDVIRITFP…HEDGELVIIT (64 aa)). The catalytic stretch occupies residues 245-542 (DHRKLGKELE…LIEEYKGAFP (298 aa)). Residues C338, H389, and H519 each coordinate Zn(2+).

It belongs to the class-II aminoacyl-tRNA synthetase family. In terms of assembly, homodimer. Zn(2+) is required as a cofactor.

It localises to the cytoplasm. The catalysed reaction is tRNA(Thr) + L-threonine + ATP = L-threonyl-tRNA(Thr) + AMP + diphosphate + H(+). Catalyzes the attachment of threonine to tRNA(Thr) in a two-step reaction: L-threonine is first activated by ATP to form Thr-AMP and then transferred to the acceptor end of tRNA(Thr). Also edits incorrectly charged L-seryl-tRNA(Thr). The sequence is that of Threonine--tRNA ligase from Geobacillus kaustophilus (strain HTA426).